Consider the following 266-residue polypeptide: Chymotrypsin-like elastase family member 1 (266 aa).

The N-terminal stretch at 1 to 16 (MLRFLVFASLVLYGHS) is a signal peptide. The propeptide at 17 to 26 (TQDFPETNAR) is activation peptide. One can recognise a Peptidase S1 domain in the interval 27 to 264 (VVGGAEARRN…YISWMNNVIA (238 aa)). A disulfide bridge connects residues C56 and C72. H71 acts as the Charge relay system in catalysis. Ca(2+) is bound by residues D85, N87, Q90, and E95. D119 functions as the Charge relay system in the catalytic mechanism. 3 disulfide bridges follow: C153-C220, C184-C200, and C210-C240. S214 (charge relay system) is an active-site residue.

Belongs to the peptidase S1 family. Elastase subfamily. The cofactor is Ca(2+). As to expression, pancreas.

The protein localises to the secreted. It carries out the reaction Hydrolysis of proteins, including elastin. Preferential cleavage: Ala-|-Xaa.. In terms of biological role, serine proteases that hydrolyze many proteins in addition to elastin. This is Chymotrypsin-like elastase family member 1 (Cela1) from Rattus norvegicus (Rat).